The chain runs to 457 residues: Argininosuccinate lyase (457 aa).

The protein belongs to the lyase 1 family. Argininosuccinate lyase subfamily.

The protein localises to the cytoplasm. It catalyses the reaction 2-(N(omega)-L-arginino)succinate = fumarate + L-arginine. The protein operates within amino-acid biosynthesis; L-arginine biosynthesis; L-arginine from L-ornithine and carbamoyl phosphate: step 3/3. This is Argininosuccinate lyase from Escherichia coli O7:K1 (strain IAI39 / ExPEC).